The following is a 232-amino-acid chain: 7-cyano-7-deazaguanine synthase (232 aa).

ATP is bound at residue 11-21 (ASGGMDSATAA). C192, C200, C203, and C206 together coordinate Zn(2+).

It belongs to the QueC family. The cofactor is Zn(2+).

It catalyses the reaction 7-carboxy-7-deazaguanine + NH4(+) + ATP = 7-cyano-7-deazaguanine + ADP + phosphate + H2O + H(+). It participates in purine metabolism; 7-cyano-7-deazaguanine biosynthesis. Functionally, catalyzes the ATP-dependent conversion of 7-carboxy-7-deazaguanine (CDG) to 7-cyano-7-deazaguanine (preQ(0)). The protein is 7-cyano-7-deazaguanine synthase of Haloarcula marismortui (strain ATCC 43049 / DSM 3752 / JCM 8966 / VKM B-1809) (Halobacterium marismortui).